The sequence spans 197 residues: Ribonuclease HII (197 aa).

An RNase H type-2 domain is found at 4–197 (IWVCGVDEAG…VRKALESVAS (194 aa)). Aspartate 10, glutamate 11, and aspartate 106 together coordinate a divalent metal cation.

It belongs to the RNase HII family. The cofactor is Mn(2+). Mg(2+) serves as cofactor.

The protein localises to the cytoplasm. The catalysed reaction is Endonucleolytic cleavage to 5'-phosphomonoester.. Functionally, endonuclease that specifically degrades the RNA of RNA-DNA hybrids. The sequence is that of Ribonuclease HII from Polynucleobacter necessarius subsp. necessarius (strain STIR1).